The following is a 317-amino-acid chain: Ribose-phosphate pyrophosphokinase A (317 aa).

Mg(2+) contacts are provided by aspartate 130, histidine 132, and aspartate 145. Residues lysine 212–glycine 227 form a binding of phosphoribosylpyrophosphate region.

This sequence belongs to the ribose-phosphate pyrophosphokinase family. Requires Mg(2+) as cofactor.

It catalyses the reaction D-ribose 5-phosphate + ATP = 5-phospho-alpha-D-ribose 1-diphosphate + AMP + H(+). Its pathway is metabolic intermediate biosynthesis; 5-phospho-alpha-D-ribose 1-diphosphate biosynthesis; 5-phospho-alpha-D-ribose 1-diphosphate from D-ribose 5-phosphate (route I): step 1/1. This chain is Ribose-phosphate pyrophosphokinase A (prsA), found in Dictyostelium discoideum (Social amoeba).